A 440-amino-acid chain; its full sequence is Nuclear hormone receptor family member nhr-130 (440 aa).

Positions 34 to 110 (LYTCQVCALP…VGMDPGRFQF (77 aa)) form a DNA-binding region, nuclear receptor. 2 consecutive NR C4-type zinc fingers follow at residues 37–57 (CQVC…CRAC) and 74–93 (CKKQ…CKKC). Residues 184–439 (EKPLIARNNL…FSHPEMFEDT (256 aa)) enclose the NR LBD domain.

Belongs to the nuclear hormone receptor family.

The protein resides in the nucleus. Orphan nuclear receptor. This is Nuclear hormone receptor family member nhr-130 (nhr-130) from Caenorhabditis elegans.